We begin with the raw amino-acid sequence, 312 residues long: DDRGK domain-containing protein 1 (312 aa).

Over 1–2 (ME) the chain is Lumenal. The helical transmembrane segment at 3–23 (LIILVGIATALLVVIITLYLL) threads the bilayer. The Cytoplasmic segment spans residues 24–312 (QKKNAAPETK…ISAGGEEASS (289 aa)). Residues 59 to 79 (NQRNRLRQNAPAAPAGQVAPA) show a composition bias toward low complexity. Residues 59–162 (NQRNRLRQNA…RKHQEDLEAE (104 aa)) form a disordered region. Residues 110-162 (LDEKMGAKKRAKMEAKEQKRLQREQELHDREQRKVKEAKEEAERKHQEDLEAE) show a composition bias toward basic and acidic residues.

The protein belongs to the DDRGK1 family. Interacts with Atg9; the interaction is transient.

Its subcellular location is the endoplasmic reticulum membrane. Its function is as follows. Substrate adapter for ufmylation, the covalent attachment of the ubiquitin-like modifier UFM1 to substrate proteins. Required for ufmylation of Atg9; protects the nervous system during aging, possibly by stabilizing Atg9 and supporting its function. This is DDRGK domain-containing protein 1 from Drosophila yakuba (Fruit fly).